We begin with the raw amino-acid sequence, 336 residues long: Ornithine carbamoyltransferase, catabolic (336 aa).

Carbamoyl phosphate-binding positions include 62 to 65, Gln-89, Arg-113, and 140 to 143; these read STRT and HPTQ. L-ornithine-binding positions include Asn-172, Asp-236, and 240–241; that span reads SM. Carbamoyl phosphate contacts are provided by residues 277–278 and Arg-322; that span reads CL.

This sequence belongs to the aspartate/ornithine carbamoyltransferase superfamily. OTCase family.

The protein resides in the cytoplasm. It catalyses the reaction carbamoyl phosphate + L-ornithine = L-citrulline + phosphate + H(+). Its pathway is amino-acid degradation; L-arginine degradation via ADI pathway; carbamoyl phosphate from L-arginine: step 2/2. Reversibly catalyzes the transfer of the carbamoyl group from carbamoyl phosphate (CP) to the N(epsilon) atom of ornithine (ORN) to produce L-citrulline. In Staphylococcus aureus (strain MRSA252), this protein is Ornithine carbamoyltransferase, catabolic.